We begin with the raw amino-acid sequence, 81 residues long: Small ribosomal subunit protein bS16 (81 aa).

The protein belongs to the bacterial ribosomal protein bS16 family.

This chain is Small ribosomal subunit protein bS16, found in Caldicellulosiruptor bescii (strain ATCC BAA-1888 / DSM 6725 / KCTC 15123 / Z-1320) (Anaerocellum thermophilum).